Reading from the N-terminus, the 528-residue chain is Pentatricopeptide repeat-containing protein At1g62914, mitochondrial (528 aa).

Residues 1–20 constitute a mitochondrion transit peptide; sequence MLAKISSSAKRFVHRSLVVR. PPR repeat units follow at residues 77 to 111, 112 to 146, 147 to 181, 182 to 216, 217 to 251, 252 to 286, 287 to 321, 322 to 356, 357 to 391, 392 to 426, 427 to 461, 462 to 496, and 497 to 528; these read SIIE…GISH, NLYT…GYEP, DIVT…GYKP, DTVT…GCQP, DLVT…KIEA, NVVI…GVRP, NVIT…KINP, NLVT…SIDP, NIFT…DCLP, NVVT…GLVG, NTVT…GVHP, NILT…TMEP, and DIYT…ALKE.

It belongs to the PPR family. P subfamily.

Its subcellular location is the mitochondrion. This chain is Pentatricopeptide repeat-containing protein At1g62914, mitochondrial, found in Arabidopsis thaliana (Mouse-ear cress).